Here is a 520-residue protein sequence, read N- to C-terminus: Rho GTPase-activating protein gacV (520 aa).

A helical membrane pass occupies residues 8-28; sequence NIKTYYIIGIITLIFIVSAVI. Residues 28–192 adopt a coiled-coil conformation; the sequence is IKNQLSSSNQ…EEQEEEQFSM (165 aa). Disordered stretches follow at residues 33 to 73, 121 to 189, 348 to 373, and 489 to 520; these read SSSN…KLDN, EEKQ…EEEQ, NNNN…NNNE, and LQEQ…DQEE. Positions 52-62 are enriched in basic residues; it reads SKGRGNKKGKK. Over residues 63–73 the composition is skewed to basic and acidic residues; the sequence is PEKIQEKKLDN. Acidic residues predominate over residues 140–189; that stretch reads QEEEEEEEEQQEIEEDEEEEEGQEQEEEEEQQEIEEGEEEQQEEEQEEEQ. Residues 195-472 enclose the Rho-GAP domain; it reads VSIERLMDFQ…ILLKQKKEIA (278 aa). A compositionally biased stretch (low complexity) spans 348–372; it reads NNNNNNNNNNNNNNNNNNDNNNNNN. Positions 480–520 form a coiled coil; that stretch reads YFKDEYSKKLQEQNDQEEDNQEEEKDNQEEDEDEEDKDQEE. Residues 493-520 show a composition bias toward acidic residues; it reads NDQEEDNQEEEKDNQEEDEDEEDKDQEE.

The protein resides in the membrane. Rho GTPase-activating protein involved in the signal transduction pathway. The sequence is that of Rho GTPase-activating protein gacV (gacV) from Dictyostelium discoideum (Social amoeba).